The primary structure comprises 297 residues: uncharacterized protein (297 aa).

An N-terminal signal peptide occupies residues 1–24 (MRAINKFLITVCIALLASVAVALG). The heme site is built by C58, C61, H62, C141, C144, H145, C167, C170, H171, C223, C226, H227, C264, C267, and H268. Positions 277 to 297 (TNSVDTWSREGEGAEVQQLPH) are disordered.

Post-translationally, binds 5 heme groups per subunit.

This is an uncharacterized protein from Archaeoglobus fulgidus (strain ATCC 49558 / DSM 4304 / JCM 9628 / NBRC 100126 / VC-16).